An 81-amino-acid chain; its full sequence is UPF0434 protein msl4429 (81 aa).

The protein belongs to the UPF0434 family.

The chain is UPF0434 protein msl4429 from Mesorhizobium japonicum (strain LMG 29417 / CECT 9101 / MAFF 303099) (Mesorhizobium loti (strain MAFF 303099)).